A 104-amino-acid chain; its full sequence is ATP-dependent Clp protease adapter protein ClpS (104 aa).

It belongs to the ClpS family. Binds to the N-terminal domain of the chaperone ClpA.

Functionally, involved in the modulation of the specificity of the ClpAP-mediated ATP-dependent protein degradation. The polypeptide is ATP-dependent Clp protease adapter protein ClpS (Hydrogenovibrio crunogenus (strain DSM 25203 / XCL-2) (Thiomicrospira crunogena)).